Reading from the N-terminus, the 76-residue chain is Putative membrane protein insertion efficiency factor (76 aa).

Belongs to the UPF0161 family.

The protein resides in the cell inner membrane. Its function is as follows. Could be involved in insertion of integral membrane proteins into the membrane. In Paraburkholderia phymatum (strain DSM 17167 / CIP 108236 / LMG 21445 / STM815) (Burkholderia phymatum), this protein is Putative membrane protein insertion efficiency factor.